The sequence spans 388 residues: Staphopain A (388 aa).

The first 25 residues, 1 to 25 (MKRNFPKLIALSLIFSLSVTPIANA), serve as a signal peptide directing secretion. Positions 26 to 214 (ESNSNIKAKD…TSQFKSNNYT (189 aa)) are excised as a propeptide. Catalysis depends on residues cysteine 238, histidine 334, and asparagine 355.

Belongs to the peptidase C47 family. In the cytoplasm, prematurely activated/folded ScpA forms a stable non-covalent complex with ScpB. In terms of processing, cleavage leads to the activation of ScpA probably by an auto-catalytic manner.

The protein localises to the secreted. The enzyme catalyses Broad endopeptidase action on proteins including elastin, but rather limited hydrolysis of small-molecule substrates. Assays are conveniently made with hemoglobin, casein or Z-Phe-Arg-NHMec as substrate.. Prematurely activated/folded staphopain A is inhibited by staphostatin A (ScpB), which is probably required to protect staphylococcal cytoplasmic proteins from degradation by ScpA. Its function is as follows. Cysteine protease that plays an important role in the inhibition of host innate immune response. Cleaves host elastins found in connective tissues, pulmonary surfactant protein A in the lungs, and the chemokine receptor CXCR2 on leukocytes. Proteolytic cleavage of surfactant protein A impairs bacterial phagocytosis by neutrophils while CXCR2 degradation blocks neutrophil activation and chemotaxis. Additionally, promotes vascular leakage by activating the plasma kallikerin/kinin system, resulting in hypotension. The polypeptide is Staphopain A (sspP) (Staphylococcus aureus (strain Mu50 / ATCC 700699)).